The sequence spans 112 residues: UPF0329 protein ECU11_0080 (112 aa).

The protein belongs to the UPF0329 family.

The chain is UPF0329 protein ECU11_0080 from Encephalitozoon cuniculi (strain GB-M1) (Microsporidian parasite).